A 504-amino-acid chain; its full sequence is Maturase K (504 aa).

It belongs to the intron maturase 2 family. MatK subfamily.

Its subcellular location is the plastid. It is found in the chloroplast. Usually encoded in the trnK tRNA gene intron. Probably assists in splicing its own and other chloroplast group II introns. In Barbarea vulgaris (Yellow rocket), this protein is Maturase K.